The sequence spans 432 residues: Enolase (432 aa).

Gln-167 contacts (2R)-2-phosphoglycerate. Glu-209 (proton donor) is an active-site residue. Mg(2+)-binding residues include Asp-246, Glu-290, and Asp-317. (2R)-2-phosphoglycerate contacts are provided by Lys-342, Arg-371, Ser-372, and Lys-393. Lys-342 (proton acceptor) is an active-site residue.

The protein belongs to the enolase family. Component of the RNA degradosome, a multiprotein complex involved in RNA processing and mRNA degradation. Mg(2+) serves as cofactor.

The protein localises to the cytoplasm. The protein resides in the secreted. It localises to the cell surface. The enzyme catalyses (2R)-2-phosphoglycerate = phosphoenolpyruvate + H2O. Its pathway is carbohydrate degradation; glycolysis; pyruvate from D-glyceraldehyde 3-phosphate: step 4/5. In terms of biological role, catalyzes the reversible conversion of 2-phosphoglycerate (2-PG) into phosphoenolpyruvate (PEP). It is essential for the degradation of carbohydrates via glycolysis. In Salmonella agona (strain SL483), this protein is Enolase.